The chain runs to 255 residues: 3-deoxy-manno-octulosonate cytidylyltransferase (255 aa).

The protein belongs to the KdsB family.

It is found in the cytoplasm. It carries out the reaction 3-deoxy-alpha-D-manno-oct-2-ulosonate + CTP = CMP-3-deoxy-beta-D-manno-octulosonate + diphosphate. It functions in the pathway nucleotide-sugar biosynthesis; CMP-3-deoxy-D-manno-octulosonate biosynthesis; CMP-3-deoxy-D-manno-octulosonate from 3-deoxy-D-manno-octulosonate and CTP: step 1/1. Its pathway is bacterial outer membrane biogenesis; lipopolysaccharide biosynthesis. Activates KDO (a required 8-carbon sugar) for incorporation into bacterial lipopolysaccharide in Gram-negative bacteria. This chain is 3-deoxy-manno-octulosonate cytidylyltransferase, found in Hahella chejuensis (strain KCTC 2396).